The sequence spans 498 residues: Probable malate:quinone oxidoreductase (498 aa).

It belongs to the MQO family. Requires FAD as cofactor.

The catalysed reaction is (S)-malate + a quinone = a quinol + oxaloacetate. Its pathway is carbohydrate metabolism; tricarboxylic acid cycle; oxaloacetate from (S)-malate (quinone route): step 1/1. In Prochlorococcus marinus (strain MIT 9301), this protein is Probable malate:quinone oxidoreductase.